The following is a 1222-amino-acid chain: ATP-dependent helicase/nuclease subunit A (1222 aa).

A UvrD-like helicase ATP-binding domain is found at 39–495 (QKRTAQQIEA…ILLKENFRSQ (457 aa)). Residue 60–67 (ASAGSGKT) participates in ATP binding. The region spanning 524–810 (QLIAGSHAQT…NLMTIHKSKG (287 aa)) is the UvrD-like helicase C-terminal domain.

This sequence belongs to the helicase family. AddA subfamily. As to quaternary structure, heterodimer of AddA and AddB/RexB. It depends on Mg(2+) as a cofactor.

The enzyme catalyses Couples ATP hydrolysis with the unwinding of duplex DNA by translocating in the 3'-5' direction.. The catalysed reaction is ATP + H2O = ADP + phosphate + H(+). Functionally, the heterodimer acts as both an ATP-dependent DNA helicase and an ATP-dependent, dual-direction single-stranded exonuclease. Recognizes the chi site generating a DNA molecule suitable for the initiation of homologous recombination. The AddA nuclease domain is required for chi fragment generation; this subunit has the helicase and 3' -&gt; 5' nuclease activities. This Streptococcus pyogenes serotype M3 (strain ATCC BAA-595 / MGAS315) protein is ATP-dependent helicase/nuclease subunit A.